A 141-amino-acid polypeptide reads, in one-letter code: Galactose-6-phosphate isomerase subunit LacA (141 aa).

Belongs to the LacAB/RpiB family. As to quaternary structure, heteromultimeric protein consisting of LacA and LacB.

The enzyme catalyses aldehydo-D-galactose 6-phosphate = keto-D-tagatose 6-phosphate. Its pathway is carbohydrate metabolism; D-galactose 6-phosphate degradation; D-tagatose 6-phosphate from D-galactose 6-phosphate: step 1/1. The protein is Galactose-6-phosphate isomerase subunit LacA of Streptococcus pneumoniae (strain Taiwan19F-14).